A 215-amino-acid chain; its full sequence is Adenylate kinase (215 aa).

Position 10 to 15 (10 to 15 (GAGKGT)) interacts with ATP. The segment at 30-59 (STGDMLRAAVKAGTPIGLKAKAVMEAGELV) is NMP. Residues Thr-31, Arg-36, 57 to 59 (ELV), 85 to 88 (GYPR), and Gln-92 contribute to the AMP site. The tract at residues 126 to 163 (GRYTCANCGEGYHDRFKQPKVAGVCDVCGSAEFKRRPD) is LID. Arg-127 is an ATP binding site. Zn(2+) contacts are provided by Cys-130, Cys-133, Cys-150, and Cys-153. The AMP site is built by Arg-160 and Arg-172. Ala-200 contributes to the ATP binding site.

The protein belongs to the adenylate kinase family. As to quaternary structure, monomer.

It is found in the cytoplasm. It carries out the reaction AMP + ATP = 2 ADP. Its pathway is purine metabolism; AMP biosynthesis via salvage pathway; AMP from ADP: step 1/1. Functionally, catalyzes the reversible transfer of the terminal phosphate group between ATP and AMP. Plays an important role in cellular energy homeostasis and in adenine nucleotide metabolism. This Rhizorhabdus wittichii (strain DSM 6014 / CCUG 31198 / JCM 15750 / NBRC 105917 / EY 4224 / RW1) (Sphingomonas wittichii) protein is Adenylate kinase.